Consider the following 135-residue polypeptide: Large ribosomal subunit protein uL16c (135 aa).

It belongs to the universal ribosomal protein uL16 family. In terms of assembly, part of the 50S ribosomal subunit.

Its subcellular location is the plastid. The protein localises to the chloroplast. The protein is Large ribosomal subunit protein uL16c of Stigeoclonium helveticum (Green alga).